The following is a 423-amino-acid chain: tRNA(Ile)-lysidine synthase (423 aa).

27 to 32 (SGGVDS) provides a ligand contact to ATP.

It belongs to the tRNA(Ile)-lysidine synthase family.

The protein resides in the cytoplasm. The enzyme catalyses cytidine(34) in tRNA(Ile2) + L-lysine + ATP = lysidine(34) in tRNA(Ile2) + AMP + diphosphate + H(+). Functionally, ligates lysine onto the cytidine present at position 34 of the AUA codon-specific tRNA(Ile) that contains the anticodon CAU, in an ATP-dependent manner. Cytidine is converted to lysidine, thus changing the amino acid specificity of the tRNA from methionine to isoleucine. This chain is tRNA(Ile)-lysidine synthase, found in Streptococcus mutans serotype c (strain ATCC 700610 / UA159).